The primary structure comprises 216 residues: Protein Syd (216 aa).

It belongs to the Syd family.

It localises to the cell inner membrane. In terms of biological role, interacts with the SecY protein in vivo. May bind preferentially to an uncomplexed state of SecY, thus functioning either as a chelating agent for excess SecY in the cell or as a regulatory factor that negatively controls the translocase function. The chain is Protein Syd from Shewanella sp. (strain MR-4).